The sequence spans 124 residues: MRASPCISQPAASWHPRPSALRPTAGSGPDTRTPGTVEDGSAPCPAFRSPAVSPCGEEPCCFQISPAEETLELGRLVSPGNCDTLSPRAAGFYACHVRSLIPCRSTKGRWPLTASAAGLSSFSG.

Residues 1–11 (MRASPCISQPA) are compositionally biased toward polar residues. A disordered region spans residues 1–42 (MRASPCISQPAASWHPRPSALRPTAGSGPDTRTPGTVEDGSA).

As to expression, strongly expressed in testis. Weakly expressed in heart, placenta and skeletal muscle.

The protein resides in the cytoplasm. The protein localises to the nucleus. Functionally, may play a significant role in p53/TP53-mediating signaling pathway. The protein is TP53-target gene 3 protein of Homo sapiens (Human).